Consider the following 211-residue polypeptide: Mitotic spindle assembly checkpoint protein MAD2B (211 aa).

The HORMA domain occupies 13–203; the sequence is QVVADILCEF…SDILKMQLYV (191 aa).

As to quaternary structure, homooligomer. Interacts with rev1. Interacts with rev3l. Interacts with fzr1 (in complex with the anaphase promoting complex APC). May interact with cdc20.

The protein resides in the nucleus. Its subcellular location is the cytoplasm. It is found in the cytoskeleton. It localises to the spindle. Adapter protein able to interact with different proteins and involved in different biological processes. Mediates the interaction between the error-prone DNA polymerase zeta catalytic subunit rev3l and the inserter polymerase rev1, thereby mediating the second polymerase switching in translesion DNA synthesis. Translesion DNA synthesis releases the replication blockade of replicative polymerases, stalled in presence of DNA lesions. May also play a role in signal transduction in response to DNA damage. May regulate the activation of the anaphase promoting complex APC thereby regulating progression through the cell cycle. Through transcriptional regulation may play a role in epithelial-mesenchymal transdifferentiation. This Xenopus tropicalis (Western clawed frog) protein is Mitotic spindle assembly checkpoint protein MAD2B (mad2l2).